The primary structure comprises 631 residues: Phosphomethylpyrimidine synthase (631 aa).

Residues N239, M268, Y297, H333, 353–355, 394–397, and E433 contribute to the substrate site; these read SRG and DGLR. Residue H437 participates in Zn(2+) binding. Y460 contributes to the substrate binding site. H501 lines the Zn(2+) pocket. The [4Fe-4S] cluster site is built by C581, C584, and C589.

This sequence belongs to the ThiC family. In terms of assembly, homodimer. [4Fe-4S] cluster is required as a cofactor.

It carries out the reaction 5-amino-1-(5-phospho-beta-D-ribosyl)imidazole + S-adenosyl-L-methionine = 4-amino-2-methyl-5-(phosphooxymethyl)pyrimidine + CO + 5'-deoxyadenosine + formate + L-methionine + 3 H(+). It participates in cofactor biosynthesis; thiamine diphosphate biosynthesis. Functionally, catalyzes the synthesis of the hydroxymethylpyrimidine phosphate (HMP-P) moiety of thiamine from aminoimidazole ribotide (AIR) in a radical S-adenosyl-L-methionine (SAM)-dependent reaction. The protein is Phosphomethylpyrimidine synthase of Escherichia coli O127:H6 (strain E2348/69 / EPEC).